The primary structure comprises 397 residues: MSSDGIKEIDSDLIETNYDNVVYKFDDLNLKPNIVRGIFGYGYETPSAIQQRAILPITEGRDVLAQAQSGTGKTATFTISALQRIDENEKSTQALILAPTRELALQIKNVITSIGLYLNVTVHASIGGTSMQDDIEAFRSGVQVVVGTPGRVFDMIERRYFKTEKVKMFIMDEADEMLSSGFKEQIYNIFRLLPETTQVVLLSATMPQDVLEVTTKFMNNPVRILVKKDELTLEGIKQFYINVELEDYKFDCLCDLYDSISVTQAVIFCNTRSKVEFLTTKLKAENFTVSAIHADLPQAERDTIMKEFRSGSSRILIATDLLARGIDVQQVSLVINYDLPSNKENYIHRIGRGGRFGRKGVAINFVTERDVGMMREIEQFYSTQIEEMPADIGALFN.

The Q motif motif lies at 23–51 (YKFDDLNLKPNIVRGIFGYGYETPSAIQQ). The Helicase ATP-binding domain maps to 54 to 224 (ILPITEGRDV…TKFMNNPVRI (171 aa)). 67 to 74 (AQSGTGKT) is a binding site for ATP. Residues 172 to 175 (DEAD) carry the DEAD box motif. The Helicase C-terminal domain occupies 235-396 (GIKQFYINVE…EMPADIGALF (162 aa)).

It belongs to the DEAD box helicase family. eIF4A subfamily. As to quaternary structure, component of the eIF4F complex, which composition varies with external and internal environmental conditions. It is composed of at least eIF4A, eIF4E and eIF4G.

It localises to the cytoplasm. It catalyses the reaction ATP + H2O = ADP + phosphate + H(+). In terms of biological role, ATP-dependent RNA helicase which is a subunit of the eIF4F complex involved in cap recognition and is required for mRNA binding to ribosome. In the current model of translation initiation, eIF4A unwinds RNA secondary structures in the 5'-UTR of mRNAs which is necessary to allow efficient binding of the small ribosomal subunit, and subsequent scanning for the initiator codon. This is ATP-dependent RNA helicase eIF4A (TIF1) from Scheffersomyces stipitis (strain ATCC 58785 / CBS 6054 / NBRC 10063 / NRRL Y-11545) (Yeast).